The sequence spans 261 residues: MGCIQSITCKARIRRENIVVYDVCATIDQCPTRIEETSPIVLRYKTPYFKASARVVMPPIPRHETWVVGWIQACNQMEFFNTYSDLGMSSWELPDLREGRVKAISDSDGVSYPWYGNTTETVTLVGPTNKISRFSVSMNDNFYPSVTWAVPVSDSNVPLLTRIKRDQSFTTWLVAMNTTTKEKIILQTIKWRMRVDIEVDPLQLLGQRARLVGRTQQEQPRILSRMEPIPPNALVKPNANDAQVLMWRPKRGPPLVVIPPK.

The protein belongs to the FAM78 family.

This is Protein FAM78B (FAM78B) from Homo sapiens (Human).